Consider the following 228-residue polypeptide: Demethylmenaquinone methyltransferase (228 aa).

S-adenosyl-L-methionine is bound by residues Thr62, Asp80, 100 to 101 (DA), and Ser117.

It belongs to the class I-like SAM-binding methyltransferase superfamily. MenG/UbiE family.

The catalysed reaction is a 2-demethylmenaquinol + S-adenosyl-L-methionine = a menaquinol + S-adenosyl-L-homocysteine + H(+). Its pathway is quinol/quinone metabolism; menaquinone biosynthesis; menaquinol from 1,4-dihydroxy-2-naphthoate: step 2/2. Its function is as follows. Methyltransferase required for the conversion of demethylmenaquinol (DMKH2) to menaquinol (MKH2). This Mycolicibacterium gilvum (strain PYR-GCK) (Mycobacterium gilvum (strain PYR-GCK)) protein is Demethylmenaquinone methyltransferase.